The following is a 48-amino-acid chain: Delta-stichotoxin-She1a (48 aa).

Intrachain disulfides connect C3–C43, C5–C33, and C26–C44.

This sequence belongs to the sea anemone sodium channel inhibitory toxin family. Type II subfamily.

The protein localises to the secreted. Its subcellular location is the nematocyst. Binds specifically to voltage-gated sodium channels (Nav), thereby delaying their inactivation during signal transduction. Is highly toxic to crabs (by intrahemocoelic injection), but without effect upon mice (by intraperitoneal injection). In Stichodactyla helianthus (Sun anemone), this protein is Delta-stichotoxin-She1a.